The sequence spans 133 residues: uncharacterized protein (133 aa).

Residues 36 to 56 (LPMLIALACIFLLLATCLLFM) traverse the membrane as a helical segment. Residues 105-133 (HGRPTVPRQPLPGPEDNRSHCDYMESTKM) are disordered. Residues 119 to 133 (EDNRSHCDYMESTKM) show a composition bias toward basic and acidic residues.

The protein resides in the membrane. This is an uncharacterized protein from Homo sapiens (Human).